We begin with the raw amino-acid sequence, 316 residues long: Coiled-coil domain-containing protein 42 (316 aa).

2 coiled-coil regions span residues 43–151 and 182–236; these read RLLE…EYSI and HHDL…SDVI.

This sequence belongs to the CFAP73 family. Interacts with ODF1 and ODF2. Interacts with CCDC38. Interacts with CCDC146. Interacts with CFAP53.

The protein resides in the cytoplasm. Its subcellular location is the perinuclear region. It is found in the cytoskeleton. It localises to the cell projection. The protein localises to the cilium. The protein resides in the flagellum. Its subcellular location is the microtubule organizing center. It is found in the centrosome. Essential for male fertility. Required for sperm development. The chain is Coiled-coil domain-containing protein 42 from Bos taurus (Bovine).